Here is a 685-residue protein sequence, read N- to C-terminus: Stromal interaction molecule 1 (685 aa).

The first 22 residues, 1-22 (MDVCVRLALWLLWGLLLHQGQS), serve as a signal peptide directing secretion. Residues 23-213 (LSHSHSEKAT…LLTRHNHLKD (191 aa)) are Extracellular-facing. 2 EF-hand domains span residues 64–97 (SFEA…EDLN) and 102–126 (TVKH…AWKS). Aspartate 76, aspartate 78, asparagine 80, aspartate 82, and glutamate 87 together coordinate Ca(2+). N-linked (GlcNAc...) asparagine glycans are attached at residues asparagine 131 and asparagine 171. Residues 132-200 (WTVDEVVQWL…QLKALDTVLF (69 aa)) form the SAM domain. Residues 214–234 (FMLVVSIVIGVGGCWFAYIQN) form a helical membrane-spanning segment. Residues 235–685 (RYSKEHMKKM…LKIFKKPLKK (451 aa)) are Cytoplasmic-facing. Residues 248–442 (LEGLHRAEQS…IEILCGFQIV (195 aa)) adopt a coiled-coil conformation. Serine 257 bears the Phosphoserine mark. The SOAR/CAD stretch occupies residues 344-442 (PEALQKWLQL…IEILCGFQIV (99 aa)). A contributes to fast Ca(2+)-dependent inactivation of CRAC channels region spans residues 475–483 (DDVDDMDEE). The segment covering 490 to 499 (MQSPSLQSSV) has biased composition (low complexity). The disordered stretch occupies residues 490 to 542 (MQSPSLQSSVRQRLTEPQHGLGSQRDLTHSDSESSLHMSDRQRVAPKPPQMSR). Threonine 504 carries the post-translational modification Phosphothreonine. Serine 512 is subject to Phosphoserine. Residues 515-532 (DLTHSDSESSLHMSDRQR) show a composition bias toward basic and acidic residues. Threonine 517 carries the post-translational modification Phosphothreonine. Phosphoserine is present on residues serine 519, serine 521, serine 523, serine 524, serine 567, serine 575, serine 602, serine 608, serine 618, serine 621, and serine 628. The disordered stretch occupies residues 596 to 685 (LMELSPSAPP…LKIFKKPLKK (90 aa)). Positions 608–620 (SPHLDSSRSHSPS) are enriched in low complexity. A Microtubule tip localization signal motif is present at residues 642-645 (TRIP). Residues 655–666 (EEDNGSIGEETD) show a composition bias toward acidic residues. Position 660 is a phosphoserine (serine 660). Threonine 665 is modified (phosphothreonine). Phosphoserine is present on serine 668. A compositionally biased stretch (basic residues) spans 670–685 (GRKKFPLKIFKKPLKK). Residues 672 to 685 (KKFPLKIFKKPLKK) form a required for generation of inwardly rectifying CRAC currents region.

In terms of assembly, monomer in the presence of Ca(2+); it oligomerizes in absence of Ca(2+). Forms homooligomers and heterooligomers with STIM2. Interacts with pore-forming subunits of CRAC channels, ORAI1, ORAI2 and ORAI3; this interaction is potentiated upon Ca(2+) store depletion. Interacts (via the transmembrane region and the SOAR/CAD domain) with SPPL3; the interaction promotes the binding of STIM1 to ORAI1. Interacts (via the SOAR/CAD domain) with ORAI1. Interacts with MAPRE1; probably required for targeting to the growing microtubule plus ends. Interacts with CRACR2A/EFCAB4B; the interaction is direct and takes place in absence of Ca(2+). Forms a complex with CRACR2A/EFCAB4B and ORAI1 at low concentration of Ca(2+), the complex dissociates at elevated Ca(2+) concentrations. Interacts with SARAF, promoting a slow inactivation of STIM1-dependent SOCE activity, possibly by facilitating the deoligomerization of STIM1. Interacts with EFHB; the interaction takes place upon Ca(2+)-store depletion and inhibits the association with SARAF. Interacts with ASPH (isoform 8). Interacts with SLC35G1; intracellular Ca(2+)-dependent. May interact with ATP1A1, ATP2A2, ATP2B1, ATP2B4, KPNB1 and XPO1; through SLC35G1. Interacts with TMEM203. Interacts with STIMATE, promoting STIM1 conformational switch. Interacts with TMEM178A. Interacts with CASQ1 (via C-terminal end and preferentially with the monomeric form); this interaction increases in response to a depletion of intracellular Ca(2+), decreases both STIM1 aggregation and clustering, interaction of STIM1 with ORAI1 and store-operated Ca(2+) entry (SOCE) activity. Interacts with ADCY8. Glycosylation is required for cell surface expression. Post-translationally, phosphorylated predominantly on Ser residues. As to expression, ubiquitously expressed in various human primary cells and tumor cell lines.

It localises to the cell membrane. The protein resides in the endoplasmic reticulum membrane. It is found in the cytoplasm. The protein localises to the cytoskeleton. Its subcellular location is the sarcoplasmic reticulum. Acts as a Ca(2+) sensor that gates two major inward rectifying Ca(2+) channels at the plasma membrane: Ca(2+) release-activated Ca(2+) (CRAC) channels and arachidonate-regulated Ca(2+)-selective (ARC) channels. Plays a role in mediating store-operated Ca(2+) entry (SOCE), a Ca(2+) influx following depletion of intracellular Ca(2+) stores. Upon Ca(2+) depletion, translocates from the endoplasmic reticulum to the plasma membrane where it activates CRAC channel pore-forming subunits ORA1, ORA2 and ORAI3 to generate sustained and oscillatory Ca(2+) entry. Involved in enamel formation. The polypeptide is Stromal interaction molecule 1 (STIM1) (Homo sapiens (Human)).